A 283-amino-acid chain; its full sequence is Pantothenate synthetase (283 aa).

Position 30 to 37 (30 to 37 (MGNLHAGH)) interacts with ATP. His-37 serves as the catalytic Proton donor. Residue Gln-61 coordinates (R)-pantoate. Gln-61 is a binding site for beta-alanine. 149–152 (GEKD) lines the ATP pocket. Gln-155 serves as a coordination point for (R)-pantoate. Residues Leu-178 and 186–189 (MSSR) each bind ATP.

This sequence belongs to the pantothenate synthetase family. As to quaternary structure, homodimer.

The protein resides in the cytoplasm. The catalysed reaction is (R)-pantoate + beta-alanine + ATP = (R)-pantothenate + AMP + diphosphate + H(+). It functions in the pathway cofactor biosynthesis; (R)-pantothenate biosynthesis; (R)-pantothenate from (R)-pantoate and beta-alanine: step 1/1. In terms of biological role, catalyzes the condensation of pantoate with beta-alanine in an ATP-dependent reaction via a pantoyl-adenylate intermediate. This is Pantothenate synthetase from Hahella chejuensis (strain KCTC 2396).